Consider the following 285-residue polypeptide: Eukaryotic translation initiation factor 3 subunit F-2 (285 aa).

One can recognise an MPN domain in the interval 11 to 145 (VLIKPLVLFQ…TRLYCAVEIG (135 aa)).

This sequence belongs to the eIF-3 subunit F family. Component of the eukaryotic translation initiation factor 3 (eIF-3) complex. The eIF-3 complex interacts with pix.

It localises to the cytoplasm. Its function is as follows. Component of the eukaryotic translation initiation factor 3 (eIF-3) complex, which is involved in protein synthesis of a specialized repertoire of mRNAs and, together with other initiation factors, stimulates binding of mRNA and methionyl-tRNAi to the 40S ribosome. The eIF-3 complex specifically targets and initiates translation of a subset of mRNAs involved in cell proliferation. This chain is Eukaryotic translation initiation factor 3 subunit F-2, found in Drosophila erecta (Fruit fly).